The sequence spans 1228 residues: Calcium-transporting ATPase (1228 aa).

Residues 1 to 63 lie on the Cytoplasmic side of the membrane; that stretch reads MEEVIKNAHT…FELILNQFDD (63 aa). A helical membrane pass occupies residues 64–81; it reads LLVKILLLAAFISFVLTL. Residues 82 to 92 are Extracellular-facing; the sequence is LDMKHKKIEIC. The chain crosses the membrane as a helical span at residues 93-112; sequence DFIEPLVIVLILILNAAVGV. Residues 113-270 are Cytoplasmic-facing; it reads WQECNAEKSL…IDLFGQQLSK (158 aa). A helical membrane pass occupies residues 271–291; that stretch reads IIFVICVTVWIINFKHFSDPI. Topologically, residues 292 to 300 are extracellular; it reads HGSFLYGCL. A helical membrane pass occupies residues 301–321; it reads YYFKISVALAVAAIPEGLPAV. Over 322–974 the chain is Cytoplasmic; it reads ITTCLALGTR…IYNNMKAFIR (653 aa). Asp358 acts as the 4-aspartylphosphate intermediate in catalysis. 2 disordered regions span residues 452–478 and 562–613; these read MKND…IPLK and MPAE…LKNA. A compositionally biased stretch (polar residues) spans 589–604; sequence FFSSKNDNSHITSTLN. Lys716 contacts ATP. Residues 975-994 traverse the membrane as a helical segment; it reads YLISSNIGEVASIFITALLG. At 995-1000 the chain is on the extracellular side; it reads IPDSLA. A helical transmembrane segment spans residues 1001–1021; sequence PVQLLWVNLVTDGLPATALGF. The Cytoplasmic segment spans residues 1022-1042; sequence NPPEHDVMKCKPRHKNDNLIN. The helical transmembrane segment at 1043–1067 threads the bilayer; the sequence is GLTLLRYIIIGTYVGIATVSIFVYW. Over 1068-1118 the chain is Extracellular; the sequence is FLFYPDSDMHTLINFYQLSHYNQCKAWNNFRVNKVYDMSEDHCSYFSAGKI. The helical transmembrane segment at 1119 to 1140 threads the bilayer; that stretch reads KASTLSLSVLVLIEMFNALNAL. Residues 1141–1151 lie on the Cytoplasmic side of the membrane; the sequence is SEYNSLFEIPP. Residues 1152–1172 form a helical membrane-spanning segment; it reads WRNMYLVLATIGSLLLHVLIL. The Extracellular portion of the chain corresponds to 1173–1185; sequence YIPPLARIFGVVP. The helical transmembrane segment at 1186–1206 threads the bilayer; that stretch reads LSAYDWFLVFLWSFPVIILDE. Topologically, residues 1207–1228 are cytoplasmic; sequence IIKFYAKRKLKEEQRTKKIKID.

The protein belongs to the cation transport ATPase (P-type) (TC 3.A.3) family.

It is found in the membrane. The catalysed reaction is Ca(2+)(in) + ATP + H2O = Ca(2+)(out) + ADP + phosphate + H(+). This magnesium-dependent enzyme catalyzes the hydrolysis of ATP coupled with the transport of the calcium. The sequence is that of Calcium-transporting ATPase (ATP6) from Plasmodium falciparum (isolate K1 / Thailand).